The sequence spans 289 residues: Probable vesicular-fusion protein sec17 homolog (289 aa).

Ser76 carries the phosphoserine modification.

The protein belongs to the SNAP family.

The protein localises to the membrane. Its function is as follows. Required for vesicular transport between the endoplasmic reticulum and the Golgi apparatus. This is Probable vesicular-fusion protein sec17 homolog (sec17) from Schizosaccharomyces pombe (strain 972 / ATCC 24843) (Fission yeast).